The chain runs to 334 residues: Formamidase (334 aa).

The CN hydrolase domain maps to 14 to 260 (FLVAAIQFPV…WEIVTGEIYP (247 aa)). The Proton acceptor role is filled by E60. Residue K133 is the Proton donor of the active site. C166 (nucleophile) is an active-site residue.

It belongs to the carbon-nitrogen hydrolase superfamily. Aliphatic amidase family.

The enzyme catalyses formamide + H2O = formate + NH4(+). In terms of biological role, is an aliphatic amidase with a restricted substrate specificity, as it only hydrolyzes formamide. The polypeptide is Formamidase (Helicobacter pylori (strain HPAG1)).